The sequence spans 701 residues: UvrABC system protein B (701 aa).

Residues arginine 35–arginine 422 form the Helicase ATP-binding domain. Glycine 48–threonine 55 is an ATP binding site. Residues tyrosine 101–isoleucine 124 carry the Beta-hairpin motif. In terms of domain architecture, Helicase C-terminal spans glutamine 439 to leucine 605. The interval alanine 620–lysine 648 is disordered. In terms of domain architecture, UVR spans alanine 656–glutamate 691.

Belongs to the UvrB family. As to quaternary structure, forms a heterotetramer with UvrA during the search for lesions. Interacts with UvrC in an incision complex.

It is found in the cytoplasm. Its function is as follows. The UvrABC repair system catalyzes the recognition and processing of DNA lesions. A damage recognition complex composed of 2 UvrA and 2 UvrB subunits scans DNA for abnormalities. Upon binding of the UvrA(2)B(2) complex to a putative damaged site, the DNA wraps around one UvrB monomer. DNA wrap is dependent on ATP binding by UvrB and probably causes local melting of the DNA helix, facilitating insertion of UvrB beta-hairpin between the DNA strands. Then UvrB probes one DNA strand for the presence of a lesion. If a lesion is found the UvrA subunits dissociate and the UvrB-DNA preincision complex is formed. This complex is subsequently bound by UvrC and the second UvrB is released. If no lesion is found, the DNA wraps around the other UvrB subunit that will check the other stand for damage. The polypeptide is UvrABC system protein B (Thermobifida fusca (strain YX)).